We begin with the raw amino-acid sequence, 716 residues long: Fatty acid oxidation complex subunit alpha (716 aa).

Residues 1 to 189 are enoyl-CoA hydratase/isomerase; it reads MIYQSPTIQV…KVGAVDAVVA (189 aa). Asp296 is a substrate binding site. The segment at 311–716 is 3-hydroxyacyl-CoA dehydrogenase; sequence KEVKNAAVLG…ATNNGSYYQA (406 aa). Residues Met324, Asp343, 400–402, Lys407, and Ser429 each bind NAD(+); that span reads VVE. His450 functions as the For 3-hydroxyacyl-CoA dehydrogenase activity in the catalytic mechanism. Asn453 contacts NAD(+). Positions 500 and 660 each coordinate substrate.

It in the N-terminal section; belongs to the enoyl-CoA hydratase/isomerase family. In the C-terminal section; belongs to the 3-hydroxyacyl-CoA dehydrogenase family. In terms of assembly, heterotetramer of two alpha chains (FadB) and two beta chains (FadA).

It catalyses the reaction a (3S)-3-hydroxyacyl-CoA + NAD(+) = a 3-oxoacyl-CoA + NADH + H(+). It carries out the reaction a (3S)-3-hydroxyacyl-CoA = a (2E)-enoyl-CoA + H2O. The enzyme catalyses a 4-saturated-(3S)-3-hydroxyacyl-CoA = a (3E)-enoyl-CoA + H2O. The catalysed reaction is (3S)-3-hydroxybutanoyl-CoA = (3R)-3-hydroxybutanoyl-CoA. It catalyses the reaction a (3Z)-enoyl-CoA = a 4-saturated (2E)-enoyl-CoA. It carries out the reaction a (3E)-enoyl-CoA = a 4-saturated (2E)-enoyl-CoA. Its pathway is lipid metabolism; fatty acid beta-oxidation. Involved in the aerobic and anaerobic degradation of long-chain fatty acids via beta-oxidation cycle. Catalyzes the formation of 3-oxoacyl-CoA from enoyl-CoA via L-3-hydroxyacyl-CoA. It can also use D-3-hydroxyacyl-CoA and cis-3-enoyl-CoA as substrate. This is Fatty acid oxidation complex subunit alpha from Shewanella putrefaciens (strain CN-32 / ATCC BAA-453).